The primary structure comprises 989 residues: Envelope glycoprotein gp130 (989 aa).

The segment at 1 to 15 (MAPPMTLQQWIIWKK) is involved in virion budding. At 1 to 65 (MAPPMTLQQW…YLLYTCCATS (65 aa)) the chain is on the cytoplasmic side. Glycyl lysine isopeptide (Lys-Gly) (interchain with G-Cter in ubiquitin) cross-links involve residues K14, K15, K18, K34, and K53. Residues 66–88 (SRVLAWMFLVCILLIIVLVSCFV) form a helical; Signal-anchor for type III membrane protein membrane-spanning segment. At 89-961 (TISRIQWNKD…AFSLLGYLKP (873 aa)) the chain is on the lumenal side. N-linked (GlcNAc...) asparagine; by host glycosylation is found at N109, N141, N183, N286, N311, N346, N391, N405, N423, N528, and N557. The tract at residues 577 to 599 (NYAKLRSMGYALTGAVQTLSQIS) is fusion peptide. N-linked (GlcNAc...) asparagine; by host glycans are attached at residues N783, N809, and N834. Residues 962-982 (ILIGVGVILLVILIFKIVSWI) form a helical membrane-spanning segment. The Cytoplasmic segment spans residues 983 to 989 (PTKKKNQ). Residues 985-987 (KKK) carry the Endoplasmic reticulum retention signal motif.

As to quaternary structure, the mature envelope protein consists of a trimer of SU-TM heterodimers. The N-terminus of leader peptide specifically interacts with Gag protein. This specific interaction between Gag protein and Env glycoprotein may allow particle egress. Envelope glycoproteins are synthesized as an inactive precursor that is processed by host furin or a furin-like protease to yield a functional hetero-oligomeric complex. In terms of processing, the transmembrane protein and the surface protein are N-glycosylated. Post-translationally, mono- and polyubiquitinated leader peptide are found in viral particles. Ubiquitination may be involved in regulating the balance between viral and subviral particles release.

Its subcellular location is the host endoplasmic reticulum membrane. It localises to the virion membrane. The surface protein (SU) attaches the virus to the host cell by binding to the cell receptor. This interaction triggers the refolding of transmembrane protein (TM) and is thought to activate its fusogenic potential by unmasking its fusion peptide. In terms of biological role, the transmembrane protein (TM) acts as a class I viral fusion protein. Under the current model, the protein has at least 3 conformational states: pre-fusion native state, pre-hairpin intermediate state, and post-fusion hairpin state. During viral and target cell membrane fusion, the coiled coil regions (heptad repeats) assume a trimer-of-hairpins structure, positioning the fusion peptide in close proximity to the C-terminal region of the ectodomain. The formation of this structure appears to drive apposition and subsequent fusion of viral and target cell membranes. Membranes fusion leads to delivery of the nucleocapsid into the cytoplasm. Its function is as follows. The leader peptide is a component of released, infectious virions and is required for particle budding. The chain is Envelope glycoprotein gp130 (env) from Homo sapiens (Human).